The sequence spans 651 residues: MSEPLLQLTGISRSFTAGDREFLALKNIDLTIHAGEMVAIIGASGSGKSTLMNILGCLDYATAGSYRINGRETRDLDNQALAELRRDYFGFIFQRYHLLPHLSAVHNVEMPAIYAGTPEPQRHARARELLARLGLEGHLTHRPSQLSGGQQQRVSIARALMNGGEVILADEPTGALDTTSGKEVMRILLELHAAGHTVILVTHDPKVAANAERIIEVSDGEILSDRRNERDTAALSNEDAVPKSTAARRLVASLGLFKEAFNMAWVALISHRMRTLLTMLGIVIGITSVVSISAIGEGAKRYVLKDIQAIGSNTIDIYSGTSFGDSRSAAIETLVPADVTALNQLYYVDSATPVVGRNLLLRYRNIDLDAQVNGVSDLYFQVRGIKMESGIPFSESDARRQAQVVVIDHNTRHRLFGEGVDPLGQVILIGNLPCTVIGVAAENKNIFSSSKSLNVWVPYETAAGRLLGQRYLDSISVRIKDGQPSKVVEDNVNKLMLQRHGTKDFFTNNLDSVMQTVQKTSRSLALLLSLIAVISLVVGGIGVMNIMLVSVTERTREIGIRMAVGARQSDIRQQFLVEAVMVCLLGGAIGISLSYAIGHLFSLFIKEWEMVFSLTSVLTAVICSTLIGIVFGFVPARNASRLDPIEALARD.

The ABC transporter domain occupies 6-244 (LQLTGISRSF…LSNEDAVPKS (239 aa)). 42–49 (GASGSGKS) is a binding site for ATP. Helical transmembrane passes span 250–270 (LVAS…ALIS), 276–296 (LLTM…SAIG), 524–544 (LALL…IGVM), 585–605 (LGGA…SLFI), and 614–634 (LTSV…FGFV).

The protein belongs to the ABC transporter superfamily. Macrolide exporter (TC 3.A.1.122) family. Probably part of a tripartite efflux system, which is composed of an inner membrane transporter, a periplasmic membrane fusion protein, and an outer membrane component.

It is found in the cell inner membrane. Probably part of a tripartite efflux system. This Pseudomonas fluorescens (strain Pf0-1) protein is Probable export ATP-binding/permease protein Pfl01_2215.